Consider the following 394-residue polypeptide: Elongation factor Tu (394 aa).

Residues 10-204 (KPHINIGTIG…AVDDNIPTPE (195 aa)) enclose the tr-type G domain. The tract at residues 19–26 (GHVDHGKT) is G1. Residue 19–26 (GHVDHGKT) coordinates GTP. Thr-26 is a Mg(2+) binding site. A G2 region spans residues 60–64 (GITIN). The interval 81–84 (DCPG) is G3. GTP-binding positions include 81–85 (DCPGH) and 136–139 (NKID). A G4 region spans residues 136-139 (NKID). The tract at residues 174–176 (SAL) is G5.

The protein belongs to the TRAFAC class translation factor GTPase superfamily. Classic translation factor GTPase family. EF-Tu/EF-1A subfamily. In terms of assembly, monomer.

It is found in the cytoplasm. The enzyme catalyses GTP + H2O = GDP + phosphate + H(+). GTP hydrolase that promotes the GTP-dependent binding of aminoacyl-tRNA to the A-site of ribosomes during protein biosynthesis. The protein is Elongation factor Tu of Chlamydia trachomatis serovar L2 (strain ATCC VR-902B / DSM 19102 / 434/Bu).